The following is a 184-amino-acid chain: dTTP/UTP pyrophosphatase (184 aa).

Residue aspartate 67 is the Proton acceptor of the active site.

It belongs to the Maf family. YhdE subfamily. The cofactor is a divalent metal cation.

It is found in the cytoplasm. The catalysed reaction is dTTP + H2O = dTMP + diphosphate + H(+). The enzyme catalyses UTP + H2O = UMP + diphosphate + H(+). Nucleoside triphosphate pyrophosphatase that hydrolyzes dTTP and UTP. May have a dual role in cell division arrest and in preventing the incorporation of modified nucleotides into cellular nucleic acids. This is dTTP/UTP pyrophosphatase from Elusimicrobium minutum (strain Pei191).